We begin with the raw amino-acid sequence, 242 residues long: UPF0309 protein BH3325 (242 aa).

An SIS domain is found at 34–217; that stretch reads VSEAVMNGGR…HLLVQQGFEP (184 aa).

This sequence belongs to the UPF0309 family.

The chain is UPF0309 protein BH3325 from Halalkalibacterium halodurans (strain ATCC BAA-125 / DSM 18197 / FERM 7344 / JCM 9153 / C-125) (Bacillus halodurans).